Reading from the N-terminus, the 198-residue chain is GTP cyclohydrolase-2 (198 aa).

52–56 (RMHSE) provides a ligand contact to GTP. Cys57, Cys68, and Cys70 together coordinate Zn(2+). GTP-binding positions include Gln73, 94–96 (EGR), and Thr116. The Proton acceptor role is filled by Asp128. Arg130 functions as the Nucleophile in the catalytic mechanism. GTP-binding residues include Thr151 and Lys156.

It belongs to the GTP cyclohydrolase II family. Zn(2+) is required as a cofactor.

It carries out the reaction GTP + 4 H2O = 2,5-diamino-6-hydroxy-4-(5-phosphoribosylamino)-pyrimidine + formate + 2 phosphate + 3 H(+). It functions in the pathway cofactor biosynthesis; riboflavin biosynthesis; 5-amino-6-(D-ribitylamino)uracil from GTP: step 1/4. Catalyzes the conversion of GTP to 2,5-diamino-6-ribosylamino-4(3H)-pyrimidinone 5'-phosphate (DARP), formate and pyrophosphate. The sequence is that of GTP cyclohydrolase-2 from Vibrio vulnificus (strain CMCP6).